Reading from the N-terminus, the 256-residue chain is Phosphatidylglycerol--prolipoprotein diacylglyceryl transferase (256 aa).

Transmembrane regions (helical) follow at residues 19-39 (VHWYGLMYLIGFVSAWLLGYW), 56-76 (LIFYSALGVILGGRVGYMLFY), and 91-111 (IWEGGMSFHGGLLGVVIAAWL). Position 139 (Arg-139) interacts with a 1,2-diacyl-sn-glycero-3-phospho-(1'-sn-glycerol). The helical transmembrane segment at 231–251 (FGWLTMGQVLSIPMLLIGIWL) threads the bilayer.

This sequence belongs to the Lgt family.

It is found in the cell inner membrane. It catalyses the reaction L-cysteinyl-[prolipoprotein] + a 1,2-diacyl-sn-glycero-3-phospho-(1'-sn-glycerol) = an S-1,2-diacyl-sn-glyceryl-L-cysteinyl-[prolipoprotein] + sn-glycerol 1-phosphate + H(+). It participates in protein modification; lipoprotein biosynthesis (diacylglyceryl transfer). Catalyzes the transfer of the diacylglyceryl group from phosphatidylglycerol to the sulfhydryl group of the N-terminal cysteine of a prolipoprotein, the first step in the formation of mature lipoproteins. This chain is Phosphatidylglycerol--prolipoprotein diacylglyceryl transferase, found in Legionella pneumophila (strain Lens).